The following is a 209-amino-acid chain: Ribosomal RNA large subunit methyltransferase E (209 aa).

Positions 63, 65, 83, 99, and 124 each coordinate S-adenosyl-L-methionine. The Proton acceptor role is filled by lysine 164.

It belongs to the class I-like SAM-binding methyltransferase superfamily. RNA methyltransferase RlmE family.

The protein resides in the cytoplasm. It catalyses the reaction uridine(2552) in 23S rRNA + S-adenosyl-L-methionine = 2'-O-methyluridine(2552) in 23S rRNA + S-adenosyl-L-homocysteine + H(+). Functionally, specifically methylates the uridine in position 2552 of 23S rRNA at the 2'-O position of the ribose in the fully assembled 50S ribosomal subunit. This Escherichia coli O81 (strain ED1a) protein is Ribosomal RNA large subunit methyltransferase E.